A 572-amino-acid chain; its full sequence is Proline--tRNA ligase (572 aa).

It belongs to the class-II aminoacyl-tRNA synthetase family. ProS type 1 subfamily. As to quaternary structure, homodimer.

The protein resides in the cytoplasm. It catalyses the reaction tRNA(Pro) + L-proline + ATP = L-prolyl-tRNA(Pro) + AMP + diphosphate. Its function is as follows. Catalyzes the attachment of proline to tRNA(Pro) in a two-step reaction: proline is first activated by ATP to form Pro-AMP and then transferred to the acceptor end of tRNA(Pro). As ProRS can inadvertently accommodate and process non-cognate amino acids such as alanine and cysteine, to avoid such errors it has two additional distinct editing activities against alanine. One activity is designated as 'pretransfer' editing and involves the tRNA(Pro)-independent hydrolysis of activated Ala-AMP. The other activity is designated 'posttransfer' editing and involves deacylation of mischarged Ala-tRNA(Pro). The misacylated Cys-tRNA(Pro) is not edited by ProRS. The chain is Proline--tRNA ligase from Escherichia coli (strain K12 / MC4100 / BW2952).